The primary structure comprises 1226 residues: MKLKRLVIQGFKSFKDRTTIHFDDGITGIVGPNGCGKSNIVDALFWVMGEQSAKHLRGKSMKDLIFAGSSKYNPGAYAEATLVLGNDDGKHIHIGNKVSSPSEIQLTRKLYRNGETEYRINNYPARLKDIQEVFMDTGAGAKSYSIIAQGEINRLVQAKPEERRTMIEEVAGITKFKVRKKESLKKIEQTEQNLNRLQDLQSEIEKNLKALQKQAEKAERARSLKEKIKRNDIIVHAHKVYDLLKDLRDGKTLLNEKTLELEGWGTRKNSLEISLEEERFKKEEQTEKLEILQKERNEISTQLATAEERFSNLCKTLTDKENLIETRQKEMTELEEELVEREEKIKALEDSLVELQTRNEETVNFEEVEEKIELLKERLELKTDQVDTLKEEIELKKSELNTLSQAAFQNTSKLEEYAANLQDITEEIEALEKQYSGVSTQIADERDAVHTAQELSEKLTEVESELKSEIEELISANKELDAKLKEKSKSLITKESKLSSLQEIAAAMDGVREGAVEFLETVDSDKYQLLGNLIQCEEDHAKAVQNLLSDFMDTLVSTDEDVSAVIEWCKTNNDKALEFLAPNKNGDITSEETLERLRVATGGDITPVHELLNLPEEYKSKLIPFFDGYFIASKFDQEVFKSISDSIRFKAISSTDGKLLVKNPGNGKILTMSGSSEGQGVVERNNQIQELEKEIEVLRVEVAELETNSGEKSLVLEQKRDSLEEQRNLLSEARADHAAKKSALESKLSGMESGNTRLEILKKRKQEISKSRLDMLESEDSLSKNKSSLDEELEELSTRFEEENAELADLKSTYETEREAYMEKQVEINTFKERVSGIQSQIEDINSQMDKQTARIASNKELIEKYNEEIETTNDQIDTLESSNQEMASELSERDDVLGIMKDDLTQLLLAMQEREDEVKELSKKIAKNEKDITEYELKINQWQNDEVEVVKNIFEKYQIDLREAIGGFLEYDQDDFDDLIDTRQMHFMETENGLVTIEKQSYEFHRRYGQDLKECSNKLKNYKNEYNRLGEINWQAIEDYDRQKLRFDFLRVQEVELKQSLEDLETAINHIDEKSKERFKIAFEEVDVRFRKVFPIIFGGGEAMLKVTGDINDSECGVDIIAKPPGKKMQNINLMSGGEKAMTAVSLIFSIFLVKPSPFCLLDEVDAPLDDANVGRFNELLREMSSDSQFILITHNKKTMELNDTLYGVTMQEPGVSKAVSVQLH.

Residue 32–39 (PNGCGKSN) participates in ATP binding. Coiled coils occupy residues 173–231 (ITKF…IKRN) and 269–491 (NSLE…SKSL). Residues 527–635 (YQLLGNLIQC…FDGYFIASKF (109 aa)) enclose the SMC hinge domain. 3 coiled-coil regions span residues 679–741 (QGVV…AAKK), 775–965 (MLES…LREA), and 1006–1078 (HRRY…KSKE).

Belongs to the SMC family. In terms of assembly, homodimer.

Its subcellular location is the cytoplasm. Functionally, required for chromosome condensation and partitioning. This is Chromosome partition protein Smc from Halobacteriovorax marinus (strain ATCC BAA-682 / DSM 15412 / SJ) (Bacteriovorax marinus).